The primary structure comprises 77 residues: Acyl carrier protein (77 aa).

In terms of domain architecture, Carrier spans 2–77 (SDIADRVKKI…DAVKFIQGAV (76 aa)). The residue at position 37 (Ser37) is an O-(pantetheine 4'-phosphoryl)serine.

It belongs to the acyl carrier protein (ACP) family. 4'-phosphopantetheine is transferred from CoA to a specific serine of apo-ACP by AcpS. This modification is essential for activity because fatty acids are bound in thioester linkage to the sulfhydryl of the prosthetic group.

The protein resides in the cytoplasm. The protein operates within lipid metabolism; fatty acid biosynthesis. Carrier of the growing fatty acid chain in fatty acid biosynthesis. The polypeptide is Acyl carrier protein (Paracoccus denitrificans (strain Pd 1222)).